The following is a 113-amino-acid chain: uncharacterized protein (113 aa).

An HTH cro/C1-type domain is found at L16 to W70. The H-T-H motif DNA-binding region spans I27 to N46.

It belongs to the VapA/VapI family.

This is an uncharacterized protein from Escherichia coli O6:H1 (strain CFT073 / ATCC 700928 / UPEC).